We begin with the raw amino-acid sequence, 959 residues long: E3 ubiquitin-protein ligase NEDD4-like (959 aa).

The C2 domain occupies 10–130; that stretch reads PWHGVCVPVC…TEDPTMERPY (121 aa). Disordered stretches follow at residues 183-206, 248-275, and 289-316; these read SNDSASQHQEELPPPPLPPGWEEK, AAHRRFRSRRHISEDLEPEPSEGGDVPE, and DSLGLALPPPPASPGSRTSPQELSEELS. The 34-residue stretch at 197–230 folds into the WW 1 domain; sequence PPLPPGWEEKVDNLGRTYYVNHNNRTTQWHRPSL. The residue at position 316 (Ser316) is a Phosphoserine. At Thr322 the chain carries Phosphothreonine. Ser346 bears the Phosphoserine; by WNK1 and WNK4 mark. Positions 369 to 402 constitute a WW 2 domain; that stretch reads PGLPSGWEERKDAKGRTYYVNHNNRTTTWTRPIM. Residues 408-478 are disordered; the sequence is GASGSATNSN…YNSPKPQHKV (71 aa). Ser430 carries the post-translational modification Phosphoserine. A Phosphoserine; by SGK1 modification is found at Ser432. Position 433 is a phosphoserine; by WNK1 and WNK4 (Ser433). The segment covering 444–455 has biased composition (basic and acidic residues); sequence GAKDSPVRRAVK. Position 448 is a phosphoserine; by SGK1 (Ser448). Phosphoserine occurs at positions 459, 463, 467, and 471. 2 WW domains span residues 481–514 and 532–565; these read SFLPPGWEMRIAPNGRPFFIDHNTKTTTWEDPRL and GPLPPGWEERIHLDGRTFYIDHNSKITQWEDPRL. The HECT domain occupies 624–958; that stretch reads RPDVLKARLW…VENAQGFEGV (335 aa). Cys926 functions as the Glycyl thioester intermediate in the catalytic mechanism.

Interacts with UBE2E3. Interacts with NDFIP1; this interaction activates the E3 ubiquitin-protein ligase. Interacts with NDFIP2; this interaction activates the E3 ubiquitin-protein ligase. Interacts (via WW domains) with SCN1A. Interacts (via WW domains) with SCN2A. Interacts (via WW domains) with SCN3A. Interacts (via WW domains) with SCN5A. Interacts (via WW domains) with SCN8A. Interacts (via WW domains) with SCN9A. Interacts (via WW domains) with SCN10A. Interacts (via WW domains) with CLCN5. Interacts with SMAD2. Interacts with SMAD3. Interacts with SMAD6. Interacts with SMAD7. The phosphorylated form interacts with 14-3-3 proteins. Interacts with TNK2. Interacts with WNK1. Interacts with SGK1. Interacts (via C2 domain) with NPC2. Interacts with ARRDC4. Interacts with KCNQ1; promotes internalization of KCNQ1. Interacts (via domains WW1, 3 and 4) with USP36; the interaction inhibits ubiquitination of, at least, NTRK1, KCNQ2 and KCNQ3 by NEDD4L. Interacts with PRRG4 (via cytoplasmic domain). Interacts with LDLRAD3; the interaction is direct. Interacts with TTYH2 and TTYH3. In terms of processing, phosphorylated; which impairs interaction with SCNN. Interaction with YWHAH inhibits dephosphorylation. Auto-ubiquitinated.

The protein localises to the cytoplasm. The protein resides in the golgi apparatus. It localises to the endosome. Its subcellular location is the multivesicular body. It carries out the reaction S-ubiquitinyl-[E2 ubiquitin-conjugating enzyme]-L-cysteine + [acceptor protein]-L-lysine = [E2 ubiquitin-conjugating enzyme]-L-cysteine + N(6)-ubiquitinyl-[acceptor protein]-L-lysine.. It participates in protein modification; protein ubiquitination. With respect to regulation, activated by NDFIP1- and NDFIP2-binding. Its function is as follows. E3 ubiquitin-protein ligase which accepts ubiquitin from an E2 ubiquitin-conjugating enzyme in the form of a thioester and then directly transfers the ubiquitin to targeted substrates. Inhibits TGF-beta signaling by triggering SMAD2 and TGFBR1 ubiquitination and proteasome-dependent degradation. Promotes ubiquitination and internalization of various plasma membrane channels such as ENaC, Nav1.2, Nav1.3, Nav1.5, Nav1.7, Nav1.8, Kv1.3, KCNH2, EAAT1 or CLC5. Promotes ubiquitination and degradation of SGK1 and TNK2. Ubiquitinates BRAT1 and this ubiquitination is enhanced in the presence of NDFIP1. Plays a role in dendrite formation by melanocytes. Involved in the regulation of TOR signaling. Ubiquitinates TTYH2 and TTYH3 and regulates protein levels of TTYH2. In Pongo abelii (Sumatran orangutan), this protein is E3 ubiquitin-protein ligase NEDD4-like (NEDD4L).